We begin with the raw amino-acid sequence, 137 residues long: Large ribosomal subunit protein uL16 (137 aa).

It belongs to the universal ribosomal protein uL16 family. As to quaternary structure, part of the 50S ribosomal subunit.

In terms of biological role, binds 23S rRNA and is also seen to make contacts with the A and possibly P site tRNAs. This chain is Large ribosomal subunit protein uL16, found in Marinomonas sp. (strain MWYL1).